A 548-amino-acid chain; its full sequence is Chaperonin GroEL 3 (548 aa).

ATP contacts are provided by residues T30–P33, K51, D87–T91, G415, and D496.

Belongs to the chaperonin (HSP60) family. As to quaternary structure, forms a cylinder of 14 subunits composed of two heptameric rings stacked back-to-back. Interacts with the co-chaperonin GroES.

It localises to the cytoplasm. The enzyme catalyses ATP + H2O + a folded polypeptide = ADP + phosphate + an unfolded polypeptide.. Functionally, together with its co-chaperonin GroES, plays an essential role in assisting protein folding. The GroEL-GroES system forms a nano-cage that allows encapsulation of the non-native substrate proteins and provides a physical environment optimized to promote and accelerate protein folding. This is Chaperonin GroEL 3 from Nitrobacter winogradskyi (strain ATCC 25391 / DSM 10237 / CIP 104748 / NCIMB 11846 / Nb-255).